A 144-amino-acid chain; its full sequence is Probable calcium-binding protein CML31 (144 aa).

EF-hand domains are found at residues 1–31, 32–67, 72–107, and 108–143; these read MAEI…FSPQ, ITSE…NGGG, EEEV…LGEK, and HTME…NKES. Ca(2+) is bound by residues aspartate 45, aspartate 47, aspartate 49, glutamine 51, glutamate 56, aspartate 85, aspartate 87, aspartate 89, lysine 91, glutamate 96, aspartate 121, aspartate 123, aspartate 125, and glutamate 132.

Potential calcium sensor. This chain is Probable calcium-binding protein CML31 (CML31), found in Arabidopsis thaliana (Mouse-ear cress).